The sequence spans 1421 residues: Envelopment polyprotein (1421 aa).

The first 20 residues, 1 to 20, serve as a signal peptide directing secretion; the sequence is MEGSYWWLSLLALLAWGANG. Topologically, residues 21 to 479 are lumenal; it reads ESTSPAETSP…CRMSHRPRTC (459 aa). Low complexity predominate over residues 22–31; it reads STSPAETSPA. The segment at 22-42 is disordered; sequence STSPAETSPAPTTPNPPVVNP. 2 N-linked (GlcNAc...) asparagine; by host glycosylation sites follow: N97 and N346. The helical transmembrane segment at 480–500 threads the bilayer; the sequence is LALFIWLGAGYGITCIAGYMV. Topologically, residues 501–610 are cytoplasmic; sequence YYAILALSML…KLGTLLKRLS (110 aa). Residues 611–631 form a helical membrane-spanning segment; that stretch reads WVTVFLCLFLTAIAPVQGQVT. Residues 632 to 643 lie on the Lumenal side of the membrane; sequence TSPVLPSNQSTE. N-linked (GlcNAc...) asparagine; by host glycosylation occurs at N639. Residues 644–664 form a helical membrane-spanning segment; that stretch reads CTLLPPPVFLIFSAVLMSKTL. Residues 665-708 are Cytoplasmic-facing; that stretch reads KRMGPVNKVGAAGHSARRTNSPKNLYKSKQIANTKSGPREPRRR. The helical transmembrane segment at 709–729 threads the bilayer; that stretch reads VVVKALLILTASSALQSIHLA. A propeptide spanning residues 722–776 is cleaved from the precursor; it reads ALQSIHLAQAFDSGSLPEGAWEEEMQLVQGCNQECSLEEDECSCPDGQSMTRKLL. Residues 730–1330 lie on the Lumenal side of the membrane; it reads QAFDSGSLPE…GSFFRNYLGS (601 aa). Intrachain disulfides connect C901–C1096 and C929–C934. N1081 and N1299 each carry an N-linked (GlcNAc...) asparagine; by host glycan. The helical transmembrane segment at 1331-1351 threads the bilayer; it reads ITLGIVLTLLPVAVVLLFFCY. Residues 1352–1421 lie on the Cytoplasmic side of the membrane; it reads GDKLFKLCSC…GKGKNYKELV (70 aa).

It belongs to the nairovirus envelope glycoprotein family. Heterodimer with glycoprotein C; in prefusion state. In terms of assembly, heterodimer with glycoprotein N; in prefusion state. Homotrimeric; in postfusion state. In terms of processing, specific enzymatic cleavage by host MBTPS1/S1P/SKI-1 endopeptidase yield glycoprotein N. Specific enzymatic cleavages by host furin-like protease and MBTPS1/S1P endopeptidase yield GP38. Post-translationally, glycosylated.

The protein localises to the host endoplasmic reticulum membrane. It localises to the virion membrane. The protein resides in the host Golgi apparatus membrane. Its function is as follows. Glycoprotein N and glycoprotein C interact with each other and are present at the surface of the virion. Glycoprotein N probably locks the Gn-Gc complex in a prefusion state. Glycoprotein N and glycoprotein C are able to attach the virion to host cell receptors. This attachment induces virion internalization predominantly through clathrin-dependent endocytosis. Glycoprotein C and glycoprotein N interact with each other and are present at the surface of the virion. The spikes at the surface of the virion are formed by an N-terminal extension of glycoprotein C. Glycoprotein N and glycoprotein C are able to attach the virion to host cell receptors. This attachment induces virion internalization predominantly through clathrin-dependent endocytosis. Class II fusion protein that promotes fusion of viral membrane with host endosomal membrane after endocytosis of the virion. Exposure to potassium is necessary for the conformational change leading to fusion. This is Envelopment polyprotein (GP) from Ixodes.